Reading from the N-terminus, the 217-residue chain is 3,4-dihydroxy-2-butanone 4-phosphate synthase (217 aa).

D-ribulose 5-phosphate-binding positions include 37-38 (RE), Asp42, 150-154 (RRGHT), and Glu174. Glu38 contacts Mg(2+). Residue His153 participates in Mg(2+) binding.

It belongs to the DHBP synthase family. In terms of assembly, homodimer. Mg(2+) is required as a cofactor. Requires Mn(2+) as cofactor.

It catalyses the reaction D-ribulose 5-phosphate = (2S)-2-hydroxy-3-oxobutyl phosphate + formate + H(+). It participates in cofactor biosynthesis; riboflavin biosynthesis; 2-hydroxy-3-oxobutyl phosphate from D-ribulose 5-phosphate: step 1/1. Catalyzes the conversion of D-ribulose 5-phosphate to formate and 3,4-dihydroxy-2-butanone 4-phosphate. The protein is 3,4-dihydroxy-2-butanone 4-phosphate synthase of Pseudoalteromonas translucida (strain TAC 125).